A 398-amino-acid chain; its full sequence is tRNA-specific 2-thiouridylase MnmA (398 aa).

Residues 20–27 (AMSGGVDS) and Leu46 contribute to the ATP site. Catalysis depends on Cys114, which acts as the Nucleophile. An intrachain disulfide couples Cys114 to Cys210. An ATP-binding site is contributed by Gly138. The tract at residues 160–162 (RDQ) is interaction with tRNA. Cys210 serves as the catalytic Cysteine persulfide intermediate.

This sequence belongs to the MnmA/TRMU family.

Its subcellular location is the cytoplasm. It carries out the reaction S-sulfanyl-L-cysteinyl-[protein] + uridine(34) in tRNA + AH2 + ATP = 2-thiouridine(34) in tRNA + L-cysteinyl-[protein] + A + AMP + diphosphate + H(+). In terms of biological role, catalyzes the 2-thiolation of uridine at the wobble position (U34) of tRNA, leading to the formation of s(2)U34. The chain is tRNA-specific 2-thiouridylase MnmA from Brucella canis (strain ATCC 23365 / NCTC 10854 / RM-666).